Reading from the N-terminus, the 95-residue chain is Exodeoxyribonuclease 7 small subunit (95 aa).

Basic and acidic residues predominate over residues 62 to 83 (LTKDESKKTNKTGFRGESKTTE). Residues 62–95 (LTKDESKKTNKTGFRGESKTTETKNNTAQEEDLF) form a disordered region.

The protein belongs to the XseB family. Heterooligomer composed of large and small subunits.

Its subcellular location is the cytoplasm. The enzyme catalyses Exonucleolytic cleavage in either 5'- to 3'- or 3'- to 5'-direction to yield nucleoside 5'-phosphates.. Bidirectionally degrades single-stranded DNA into large acid-insoluble oligonucleotides, which are then degraded further into small acid-soluble oligonucleotides. In Leptospira interrogans serogroup Icterohaemorrhagiae serovar copenhageni (strain Fiocruz L1-130), this protein is Exodeoxyribonuclease 7 small subunit.